A 33-amino-acid polypeptide reads, in one-letter code: Photosystem II reaction center protein Psb30 (33 aa).

A helical membrane pass occupies residues 5-25 (LIVQLTSLALITLAGPLIVAL).

It belongs to the Psb30/Ycf12 family. As to quaternary structure, PSII is composed of 1 copy each of membrane proteins PsbA, PsbB, PsbC, PsbD, PsbE, PsbF, PsbH, PsbI, PsbJ, PsbK, PsbL, PsbM, PsbT, PsbY, PsbZ, Psb30/Ycf12, peripheral proteins of the oxygen-evolving complex and a large number of cofactors. It forms dimeric complexes.

It is found in the plastid. The protein localises to the chloroplast thylakoid membrane. Its function is as follows. A core subunit of photosystem II (PSII), probably helps stabilize the reaction center. This is Photosystem II reaction center protein Psb30 from Euglena sanguinea.